Reading from the N-terminus, the 338-residue chain is Glutamyl-tRNA reductase (338 aa).

Residues threonine 50–arginine 53, serine 102, glutamate 107–glutamate 109, and glutamine 113 each bind substrate. Cysteine 51 acts as the Nucleophile in catalysis. Residue glycine 181–asparagine 186 coordinates NADP(+).

It belongs to the glutamyl-tRNA reductase family. As to quaternary structure, homodimer.

The enzyme catalyses (S)-4-amino-5-oxopentanoate + tRNA(Glu) + NADP(+) = L-glutamyl-tRNA(Glu) + NADPH + H(+). Its pathway is porphyrin-containing compound metabolism; protoporphyrin-IX biosynthesis; 5-aminolevulinate from L-glutamyl-tRNA(Glu): step 1/2. Catalyzes the NADPH-dependent reduction of glutamyl-tRNA(Glu) to glutamate 1-semialdehyde (GSA). This is Glutamyl-tRNA reductase from Chlamydia abortus (strain DSM 27085 / S26/3) (Chlamydophila abortus).